The following is a 179-amino-acid chain: MQQNIIKVIVGSKNPVKINAAANAMALLFPEYEIQTQGMDAPSGVPAQPMTDSDTRQGAINRVHYCQQQVEADYYFAMEGGVDCFEFGPATFAYIAIAHQARLSIGRGALLPLPMQVYQALEAGEELGHVMDRLFNTVNIKQKGGAIGLLTHGHATRESNYTQAIILAMAPFLNPELYP.

E71 provides a ligand contact to Mg(2+). 71–72 is a binding site for substrate; it reads EA.

This sequence belongs to the YjjX NTPase family. In terms of assembly, homodimer. Requires Mg(2+) as cofactor. Mn(2+) is required as a cofactor.

The enzyme catalyses XTP + H2O = XDP + phosphate + H(+). It carries out the reaction ITP + H2O = IDP + phosphate + H(+). Phosphatase that hydrolyzes non-canonical purine nucleotides such as XTP and ITP to their respective diphosphate derivatives. Probably excludes non-canonical purines from DNA/RNA precursor pool, thus preventing their incorporation into DNA/RNA and avoiding chromosomal lesions. The polypeptide is Inosine/xanthosine triphosphatase (Shewanella sp. (strain MR-7)).